Reading from the N-terminus, the 31-residue chain is Histone H1.3 (31 aa).

The protein belongs to the histone H1/H5 family.

The protein resides in the nucleus. Its subcellular location is the chromosome. Functionally, histones H1 are necessary for the condensation of nucleosome chains into higher-order structures. The protein is Histone H1.3 of Triticum aestivum (Wheat).